The following is a 125-amino-acid chain: Large ribosomal subunit protein uL22 (125 aa).

The protein belongs to the universal ribosomal protein uL22 family. As to quaternary structure, part of the 50S ribosomal subunit.

This protein binds specifically to 23S rRNA; its binding is stimulated by other ribosomal proteins, e.g. L4, L17, and L20. It is important during the early stages of 50S assembly. It makes multiple contacts with different domains of the 23S rRNA in the assembled 50S subunit and ribosome. In terms of biological role, the globular domain of the protein is located near the polypeptide exit tunnel on the outside of the subunit, while an extended beta-hairpin is found that lines the wall of the exit tunnel in the center of the 70S ribosome. This is Large ribosomal subunit protein uL22 from Erythrobacter litoralis (strain HTCC2594).